Consider the following 103-residue polypeptide: PTS system lactose-specific EIIA component (103 aa).

Residues 1-102 enclose the PTS EIIA type-3 domain; it reads MNREEVQLLG…MKHLLEFYKR (102 aa). The active-site Tele-phosphohistidine intermediate is the H78. H78 carries the phosphohistidine; by HPr modification. A Mg(2+)-binding site is contributed by D81.

In terms of assembly, homotrimer. Mg(2+) is required as a cofactor.

Its subcellular location is the cytoplasm. Functionally, the phosphoenolpyruvate-dependent sugar phosphotransferase system (sugar PTS), a major carbohydrate active transport system, catalyzes the phosphorylation of incoming sugar substrates concomitantly with their translocation across the cell membrane. The enzyme II LacEF PTS system is involved in lactose transport. This is PTS system lactose-specific EIIA component from Staphylococcus aureus (strain COL).